Consider the following 293-residue polypeptide: Elongation factor Ts (293 aa).

Residues 80–83 are involved in Mg(2+) ion dislocation from EF-Tu; sequence TDFV.

It belongs to the EF-Ts family.

It localises to the cytoplasm. Functionally, associates with the EF-Tu.GDP complex and induces the exchange of GDP to GTP. It remains bound to the aminoacyl-tRNA.EF-Tu.GTP complex up to the GTP hydrolysis stage on the ribosome. This is Elongation factor Ts from Burkholderia vietnamiensis (strain G4 / LMG 22486) (Burkholderia cepacia (strain R1808)).